The following is a 612-amino-acid chain: Dihydroxy-acid dehydratase (612 aa).

Mg(2+) is bound at residue Asp81. Cys122 contacts [2Fe-2S] cluster. The Mg(2+) site is built by Asp123 and Lys124. An N6-carboxylysine modification is found at Lys124. Cys193 contacts [2Fe-2S] cluster. A Mg(2+)-binding site is contributed by Glu489. Ser515 (proton acceptor) is an active-site residue.

This sequence belongs to the IlvD/Edd family. In terms of assembly, homodimer. The cofactor is [2Fe-2S] cluster. Mg(2+) is required as a cofactor.

The enzyme catalyses (2R)-2,3-dihydroxy-3-methylbutanoate = 3-methyl-2-oxobutanoate + H2O. It carries out the reaction (2R,3R)-2,3-dihydroxy-3-methylpentanoate = (S)-3-methyl-2-oxopentanoate + H2O. It functions in the pathway amino-acid biosynthesis; L-isoleucine biosynthesis; L-isoleucine from 2-oxobutanoate: step 3/4. Its pathway is amino-acid biosynthesis; L-valine biosynthesis; L-valine from pyruvate: step 3/4. In terms of biological role, functions in the biosynthesis of branched-chain amino acids. Catalyzes the dehydration of (2R,3R)-2,3-dihydroxy-3-methylpentanoate (2,3-dihydroxy-3-methylvalerate) into 2-oxo-3-methylpentanoate (2-oxo-3-methylvalerate) and of (2R)-2,3-dihydroxy-3-methylbutanoate (2,3-dihydroxyisovalerate) into 2-oxo-3-methylbutanoate (2-oxoisovalerate), the penultimate precursor to L-isoleucine and L-valine, respectively. In Xanthomonas oryzae pv. oryzae (strain MAFF 311018), this protein is Dihydroxy-acid dehydratase.